Here is a 400-residue protein sequence, read N- to C-terminus: Probable S-adenosylmethionine synthase (400 aa).

135-140 contacts ATP; sequence KPGSKD.

The protein belongs to the AdoMet synthase 2 family. Mg(2+) serves as cofactor.

It carries out the reaction L-methionine + ATP + H2O = S-adenosyl-L-methionine + phosphate + diphosphate. It functions in the pathway amino-acid biosynthesis; S-adenosyl-L-methionine biosynthesis; S-adenosyl-L-methionine from L-methionine: step 1/1. Functionally, catalyzes the formation of S-adenosylmethionine from methionine and ATP. The polypeptide is Probable S-adenosylmethionine synthase (mat) (Aquifex aeolicus (strain VF5)).